Here is a 98-residue protein sequence, read N- to C-terminus: Trp operon repressor homolog (98 aa).

A DNA-binding region spans residues 59-82; the sequence is QRQVSQMLGVGVATITRGSNELKA.

It belongs to the TrpR family. As to quaternary structure, homodimer.

The protein resides in the cytoplasm. In terms of biological role, this protein is an aporepressor. When complexed with L-tryptophan it binds the operator region of the trp operon and prevents the initiation of transcription. This is Trp operon repressor homolog from Vibrio atlanticus (strain LGP32) (Vibrio splendidus (strain Mel32)).